Consider the following 297-residue polypeptide: MEGALQVCRNCKRRVASNHLGLHEAHCLMYLVLCPECKEPVLQHEMEEHCQGGHQQVGCAMCQQSVPKHSLDSHEAQECQERPVECQFCQLAVRLNKVDLHEHHCGQQTELCPDCGQHVMLRVLARHREECQREQLRLQKGKSIPVPESNICCHYCNQMIPGNKYFHHLDRCRRVSGAVTPSPVGKPEIPPSSPLSWAAEDQTSKAEKDVRPKLKNRHRAPFLSEKSTRQAPRGTNKTTNLSLKSNGKLRASSPVEDETAYDILRRCSQCDILLPLPTLNHHQEKCRRLASSKGKQV.

A TRAF-type zinc finger spans residues 22-99 (LHEAHCLMYL…QLAVRLNKVD (78 aa)). The segment at 178–255 (AVTPSPVGKP…NGKLRASSPV (78 aa)) is disordered. Residues 202 to 212 (QTSKAEKDVRP) are compositionally biased toward basic and acidic residues. The span at 229 to 245 (RQAPRGTNKTTNLSLKS) shows a compositional bias: polar residues.

Interacts with BIRC1, BIRC2, BIRC3, BIRC4, BIRC7 and BIRC8. Part of an complex consisting of BIRC4, XAF1 and BIRC5; the complex formation requires IFN-beta stimulation. Interacts with RNF114, the interaction increases XAF1 stability and proapoptotic effects, and may regulate IFN signaling.

It localises to the cytoplasm. Its subcellular location is the nucleus. The protein localises to the mitochondrion. Seems to function as a negative regulator of members of the IAP (inhibitor of apoptosis protein) family. Inhibits anti-caspase activity of BIRC4. Induces cleavage and inactivation of BIRC4 independent of caspase activation. Mediates TNF-alpha-induced apoptosis and is involved in apoptosis in trophoblast cells. May inhibit BIRC4 indirectly by activating the mitochondrial apoptosis pathway. After translocation to mitochondria, promotes translocation of BAX to mitochondria and cytochrome c release from mitochondria. Seems to promote the redistribution of BIRC4 from the cytoplasm to the nucleus, probably independent of BIRC4 inactivation which seems to occur in the cytoplasm. The BIRC4-XAF1 complex mediates down-regulation of BIRC5/survivin; the process requires the E3 ligase activity of BIRC4. Seems to be involved in cellular sensitivity to the proapoptotic actions of TRAIL. May be a tumor suppressor by mediating apoptosis resistance of cancer cells. The protein is XIAP-associated factor 1 (XAF1) of Bos taurus (Bovine).